A 538-amino-acid chain; its full sequence is Efflux pump radE (538 aa).

Composition is skewed to basic and acidic residues over residues Met-1–Pro-12, Glu-20–His-35, and Asp-65–Asn-74. 2 disordered regions span residues Met-1–His-35 and Asp-65–Trp-90. 12 helical membrane passes run Ala-100–Ile-120, Leu-134–Ala-154, Val-163–Ser-183, Phe-194–Leu-214, Ser-225–Leu-245, Trp-253–Leu-273, Pro-327–Ile-347, Glu-362–Val-382, Ile-409–Thr-429, Trp-436–Ser-456, Ile-482–Trp-502, and Ser-505–Gly-525.

The protein belongs to the major facilitator superfamily.

The protein resides in the cell membrane. Its function is as follows. Efflux pump that might be required for efficient secretion of radicicol or other secondary metabolies produced by the radicicol gene cluster. In Floropilus chiversii (Chaetomium chiversii), this protein is Efflux pump radE.